Consider the following 624-residue polypeptide: DNA-directed RNA polymerase III subunit rpc-3 (624 aa).

Disordered regions lie at residues 229 to 260 (KRKL…EEDL) and 373 to 418 (LAPK…ARMS). The segment covering 385–403 (DDSDDDEEDGDYSDSDEEM) has biased composition (acidic residues). Residues 551–572 (CYATMVHCLQVLEVRRQKDKDV) form a leucine-zipper region.

This sequence belongs to the RNA polymerase beta chain family. In terms of assembly, component of the RNA polymerase III (Pol III) complex consisting of 17 subunits.

Its subcellular location is the nucleus. Its function is as follows. DNA-dependent RNA polymerase catalyzes the transcription of DNA into RNA using the four ribonucleoside triphosphates as substrates. Specific core component of RNA polymerase III which synthesizes small RNAs, such as 5S rRNA and tRNAs. This Neurospora crassa (strain ATCC 24698 / 74-OR23-1A / CBS 708.71 / DSM 1257 / FGSC 987) protein is DNA-directed RNA polymerase III subunit rpc-3 (rpc-82).